Here is a 433-residue protein sequence, read N- to C-terminus: G2/mitotic-specific cyclin-B1 (433 aa).

The interval 19-47 is disordered; that stretch reads INMAGAKRVPTAPAATSKPGLRPRTALGD. Lysine 73 is modified (N6-acetyllysine). Residues 93–116 are disordered; it reads PVSEPVPEPEPEPEPEPVKEEKLS. At serine 126 the chain carries Phosphoserine; by CDK1. Serine 128 carries the post-translational modification Phosphoserine. Serine 133 carries the phosphoserine; by PLK1 modification. Serine 147 bears the Phosphoserine mark. 2 interaction with CDK2 regions span residues 169–177 and 258–261; these read EYVKDIYAY and YEEM. Threonine 321 is subject to Phosphothreonine.

The protein belongs to the cyclin family. Cyclin AB subfamily. As to quaternary structure, interacts with the CDC2 protein kinase to form a serine/threonine kinase holoenzyme complex also known as maturation promoting factor (MPF). The cyclin subunit imparts substrate specificity to the complex. Binds HEI10. Interacts with catalytically active RALBP1 and CDC2 during mitosis to form an endocytotic complex during interphase. Interacts with CCNF; interaction is required for nuclear localization. Interacts with CDK5RAP3. Interacts with RFPL4A and UBE2A. Interacts with INCA1. Post-translationally, ubiquitinated by the SCF(NIPA) complex during interphase, leading to its destruction. Deubiquitinated by USP22 during G2/M phase. In terms of processing, phosphorylated by PLK1 at Ser-133 on centrosomes during prophase: phosphorylation by PLK1 does not cause nuclear import. Phosphorylation at Ser-147 was also reported to be mediated by PLK1 but Ser-133 seems to be the primary phosphorylation site.

It is found in the cytoplasm. It localises to the nucleus. The protein resides in the cytoskeleton. The protein localises to the microtubule organizing center. Its subcellular location is the centrosome. Functionally, essential for the control of the cell cycle at the G2/M (mitosis) transition. The polypeptide is G2/mitotic-specific cyclin-B1 (CCNB1) (Homo sapiens (Human)).